The sequence spans 257 residues: Zinc transporter ZupT (257 aa).

The next 3 membrane-spanning stretches (helical) occupy residues 5 to 25 (LILT…GVLG), 32 to 52 (LLAF…LMEM), and 61 to 81 (GMSP…YFGL). Fe(2+)-binding residues include Asn120 and Glu123. Positions 123 and 148 each coordinate Zn(2+). 4 helical membrane passes run 137–157 (LGFG…LAVA), 171–191 (ILWA…AWLI), 195–215 (MISP…MVAL), and 236–256 (GVLC…TAGI). The Fe(2+) site is built by Asn149, Glu152, and Glu181. Glu152 is a binding site for Zn(2+).

Belongs to the ZIP transporter (TC 2.A.5) family. ZupT subfamily.

It is found in the cell inner membrane. It catalyses the reaction Zn(2+)(in) = Zn(2+)(out). Its function is as follows. Mediates zinc uptake. May also transport other divalent cations. This chain is Zinc transporter ZupT, found in Escherichia coli O45:K1 (strain S88 / ExPEC).